Here is a 1589-residue protein sequence, read N- to C-terminus: Polyhomeotic-proximal chromatin protein (1589 aa).

Over residues 1-15 (MDRRALKFMQKRADT) the composition is skewed to basic and acidic residues. 5 disordered regions span residues 1 to 85 (MDRR…GGKQ), 107 to 174 (KYDV…NCNS), 252 to 290 (LQQQ…STAI), 1112 to 1244 (LSTA…STTT), and 1260 to 1294 (AVST…NGSK). Low complexity-rich tracts occupy residues 18–28 (DTTTPVSTTAS), 60–80 (NHNN…QQQQ), and 119–139 (AQQQ…VTPT). Polar residues predominate over residues 154-174 (HTPSTPNRPSAPSTPNTNCNS). Residues 260–271 (NGGGAASAGAGG) are compositionally biased toward gly residues. Positions 272 to 285 (AASPANSQQSQQQQ) are enriched in low complexity. Residue Ser1145 is modified to Phosphoserine. Thr1148 carries the phosphothreonine modification. Over residues 1157-1180 (TTPKSSTPATVSASVEASSSTGEA) the composition is skewed to low complexity. Residues 1189–1221 (RSSTPSKGATTPTSKQSNAAVQPPSSTTPNSVS) are compositionally biased toward polar residues. 2 stretches are compositionally biased toward low complexity: residues 1230-1244 (TCGS…STTT) and 1260-1290 (AVST…SSIS). Residues 1356-1389 (SAPGSDMVACEQCGKMEHKAKLKRKRYCSPGCSR) form an FCS-type zinc finger. The Zn(2+) site is built by Cys1365, Cys1368, Cys1383, and Cys1387. In terms of domain architecture, SAM spans 1513-1577 (WSVDDVSNFI…VAKVESIKEV (65 aa)).

Component of PRC1 complex, which contains many PcG proteins like Pc, ph, Scm, Psc, Sce and also chromatin-remodeling proteins such as histone deacetylases. This complex is distinct from the Esc/E(z) complex, at least composed of esc, E(z), Su(z)12, HDAC1/Rpd3 and Caf1-55. The 2 complexes however cooperate and interact together during the first 3 hours of development to establish PcG silencing. Interacts with the SAM domain of Scm via its SAM domain in vitro. Interacts with Trl in vivo and with corto in vitro. In terms of tissue distribution, salivary glands.

The protein resides in the nucleus. Its function is as follows. Polycomb group (PcG) protein. PcG proteins act by forming multiprotein complexes, which are required to maintain the transcriptionally repressive state of homeotic genes throughout development. PcG proteins are not required to initiate repression, but to maintain it during later stages of development. Component of the PcG multiprotein PRC1 complex, a complex that acts via chromatin remodeling and modification of histones; it mediates monoubiquitination of histone H2A 'Lys-118', rendering chromatin heritably changed in its expressibility. Plays a role in regulating the expression of other pair-rule genes such as eve, ftz, and H. This Drosophila melanogaster (Fruit fly) protein is Polyhomeotic-proximal chromatin protein (ph-p).